We begin with the raw amino-acid sequence, 466 residues long: Ribosomal protein uS12 methylthiotransferase RimO (466 aa).

In terms of domain architecture, MTTase N-terminal spans 16–127; that stretch reads PKVAFAHLGC…IVDVLQRVEA (112 aa). [4Fe-4S] cluster is bound by residues Cys25, Cys61, Cys90, Cys165, Cys169, and Cys172. Residues 151-380 enclose the Radical SAM core domain; sequence TTDQAVAYLK…MALQQPIAAE (230 aa). One can recognise a TRAM domain in the interval 383–454; the sequence is QRWVGKTVDV…IYDLTGHIVG (72 aa).

The protein belongs to the methylthiotransferase family. RimO subfamily. The cofactor is [4Fe-4S] cluster.

It is found in the cytoplasm. It catalyses the reaction L-aspartate(89)-[ribosomal protein uS12]-hydrogen + (sulfur carrier)-SH + AH2 + 2 S-adenosyl-L-methionine = 3-methylsulfanyl-L-aspartate(89)-[ribosomal protein uS12]-hydrogen + (sulfur carrier)-H + 5'-deoxyadenosine + L-methionine + A + S-adenosyl-L-homocysteine + 2 H(+). In terms of biological role, catalyzes the methylthiolation of an aspartic acid residue of ribosomal protein uS12. The protein is Ribosomal protein uS12 methylthiotransferase RimO of Synechococcus sp. (strain CC9902).